The following is a 336-amino-acid chain: MSEALYIFYALPYICFAIFVIGTIYRVVDWARSAVPLKIPTTSAQQPSFKFVRRTWIDKIDSPSSKFWAFVRVLFVVFLFRDLFRNTRYYIEMGGKNVDTRWLWLFAILFHYSLLVIVIRHLRFFTNPVPDFVKTLEYLDGVLGVAIVPPLLMTGVIALVALAFLWGRRILLAKERSISIPSDHLILFFMAVILVSGLLMRYIIKADLSYVKMFALSVVTFQPPSPEVLANLHWLFLIHFTFVCITIAYIPFSKVMHFAGVWFSPTRNMPNDNRRKRHVNPWDPNPELPILVREGITVAGVTYKCKKLDWDTYYEMYKDQLDEIAEKNYTLKAEEF.

Helical transmembrane passes span 4 to 24, 60 to 80, 102 to 122, 145 to 165, 184 to 204, and 232 to 252; these read ALYI…IGTI, IDSP…VFLF, WLWL…IRHL, VAIV…LAFL, HLIL…RYII, and LHWL…YIPF.

The protein resides in the cell membrane. Functionally, has menaquinol-oxidizing activity. The HmeC and HmeD subunits may together mediate electron transfer from menaquinol to an unidentified electron acceptor on the cytoplasmic side of the membrane. This is Hdr-like menaquinol oxidoreductase cytochrome b-like subunit (hmeC) from Archaeoglobus profundus (strain DSM 5631 / JCM 9629 / NBRC 100127 / Av18).